Here is a 54-residue protein sequence, read N- to C-terminus: Protein GndA (54 aa).

A helical transmembrane segment spans residues 28–50 (LFVVIVSFQQRALTSSVPVFLAV).

The protein localises to the cell inner membrane. This chain is Protein GndA, found in Escherichia coli (strain K12).